The sequence spans 145 residues: D-aminoacyl-tRNA deacylase (145 aa).

Residues Gly-137–Pro-138 carry the Gly-cisPro motif, important for rejection of L-amino acids motif.

It belongs to the DTD family. As to quaternary structure, homodimer.

It is found in the cytoplasm. It catalyses the reaction glycyl-tRNA(Ala) + H2O = tRNA(Ala) + glycine + H(+). The enzyme catalyses a D-aminoacyl-tRNA + H2O = a tRNA + a D-alpha-amino acid + H(+). Its function is as follows. An aminoacyl-tRNA editing enzyme that deacylates mischarged D-aminoacyl-tRNAs. Also deacylates mischarged glycyl-tRNA(Ala), protecting cells against glycine mischarging by AlaRS. Acts via tRNA-based rather than protein-based catalysis; rejects L-amino acids rather than detecting D-amino acids in the active site. By recycling D-aminoacyl-tRNA to D-amino acids and free tRNA molecules, this enzyme counteracts the toxicity associated with the formation of D-aminoacyl-tRNA entities in vivo and helps enforce protein L-homochirality. The sequence is that of D-aminoacyl-tRNA deacylase from Shewanella woodyi (strain ATCC 51908 / MS32).